The primary structure comprises 1175 residues: Major DNA-binding protein (1175 aa).

A zinc finger lies at 496–509; that stretch reads CSLCDRASRPACAH. The Required for filament formation signature appears at 825 to 826; sequence FW. Residues 1151-1175 form a required for nuclear localization region; that stretch reads KRPPPEDDLFDMGAPPEKRLTFDML.

This sequence belongs to the herpesviridae major DNA-binding protein family. In terms of assembly, homooligomers. Forms double-helical filaments necessary for the formation of replication compartments within the host nucleus. Interacts with the origin-binding protein. Interacts with the helicase primase complex; this interaction stimulates primer synthesis activity of the helicase-primase complex. Interacts with the DNA polymerase. Interacts with the alkaline exonuclease; this interaction increases its nuclease processivity.

It localises to the host nucleus. Its function is as follows. Plays several crucial roles in viral infection. Participates in the opening of the viral DNA origin to initiate replication by interacting with the origin-binding protein. May disrupt loops, hairpins and other secondary structures present on ssDNA to reduce and eliminate pausing of viral DNA polymerase at specific sites during elongation. Promotes viral DNA recombination by performing strand-transfer, characterized by the ability to transfer a DNA strand from a linear duplex to a complementary single-stranded DNA circle. Can also catalyze the renaturation of complementary single strands. Additionally, reorganizes the host cell nucleus, leading to the formation of prereplicative sites and replication compartments. This process is driven by the protein which can form double-helical filaments in the absence of DNA. The polypeptide is Major DNA-binding protein (Suid herpesvirus 1 (SuHV-1)).